The sequence spans 137 residues: NADPH-dependent 7-cyano-7-deazaguanine reductase (137 aa).

Cys50 (thioimide intermediate) is an active-site residue. Asp57 serves as the catalytic Proton donor. Substrate is bound by residues 72-74 (VEL) and 91-92 (HE).

Belongs to the GTP cyclohydrolase I family. QueF type 1 subfamily.

Its subcellular location is the cytoplasm. It catalyses the reaction 7-aminomethyl-7-carbaguanine + 2 NADP(+) = 7-cyano-7-deazaguanine + 2 NADPH + 3 H(+). It participates in tRNA modification; tRNA-queuosine biosynthesis. In terms of biological role, catalyzes the NADPH-dependent reduction of 7-cyano-7-deazaguanine (preQ0) to 7-aminomethyl-7-deazaguanine (preQ1). The protein is NADPH-dependent 7-cyano-7-deazaguanine reductase of Synechocystis sp. (strain ATCC 27184 / PCC 6803 / Kazusa).